The following is a 373-amino-acid chain: Ferroptosis suppressor protein 1 (373 aa).

Glycine 2 carries the N-myristoyl glycine lipid modification. A helical membrane pass occupies residues 7–27; sequence VESGALHVVIVGGGFGGIAAA. 6-hydroxy-FAD-binding positions include 18–22, arginine 54, and valine 82; that span reads GGGFG. Residue lysine 168 is modified to N6-acetyllysine; by KAT2B. Aspartate 285 provides a ligand contact to 6-hydroxy-FAD.

The protein belongs to the FAD-dependent oxidoreductase family. Interacts with importin subunits KPNA2 and IPO5; this interaction likely mediates the translocation into the nucleus upon oxidative stress. It depends on 6-hydroxy-FAD as a cofactor. In terms of processing, N-myristoylation at Gly-2 mediates the recruitment to lipid droplets and plasma membrane, enabling its anti-lipid peroxidation activity. Acetylation at Lys-168 prevents AIFM2 ubiquitination and degradation, thereby inhibiting ferroptosis. KAT2B mediates acetylation at Lys-168, while HDAC3 removes it. Post-translationally, ubiquitinated. AIFM2 undergoes 'Lys-29'-ubiquitination and proteasomal degradation, which is inhibited by acetylation at Lys-168. Detected in most normal tissues as two transcripts of 1.8 and 4.0 kb in length, respectively. Highly expressed in heart, moderately in liver and skeletal muscles, and expressed at low levels in placenta, lung, kidney, and pancreas. Both transcripts expressed following p53/TP53 induction. The shorter 1.8 kb transcript seems to be the major transcript in EB1 colon cancer cells.

It localises to the lipid droplet. It is found in the cell membrane. Its subcellular location is the cytoplasm. The protein resides in the mitochondrion membrane. The protein localises to the nucleus. It carries out the reaction ubiquinone-10 + NADH + H(+) = ubiquinol-10 + NAD(+). It catalyses the reaction phylloquinone + NADH + H(+) = phylloquinol + NAD(+). The enzyme catalyses menaquinone-4 + NADH + H(+) = menaquinol-4 + NAD(+). The catalysed reaction is menadione + NADH + H(+) = menadiol + NAD(+). With respect to regulation, the modification by 4-hydroxy-2-nonenal (HNE) adduction in mitochondria results in loss of the oxidoreductase activity and activation of a novel function in mitochondrial oxidative stress signaling. An NAD(P)H-dependent oxidoreductase that acts as a key inhibitor of ferroptosis. At the plasma membrane, catalyzes reduction of coenzyme Q/ubiquinone-10 to ubiquinol-10, a lipophilic radical-trapping antioxidant that prevents lipid oxidative damage and consequently ferroptosis. Acts in parallel to GPX4 to suppress phospholipid peroxidation and ferroptosis. This anti-ferroptotic function is independent of cellular glutathione levels. Also acts as a potent radical-trapping antioxidant by mediating warfarin-resistant vitamin K reduction in the canonical vitamin K cycle: catalyzes NAD(P)H-dependent reduction of vitamin K (phylloquinone, menaquinone-4 and menadione) to hydroquinone forms. Hydroquinones act as potent radical-trapping antioxidants inhibitor of phospholipid peroxidation and ferroptosis. May play a role in mitochondrial stress signaling. Upon oxidative stress, associates with the lipid peroxidation end product 4-hydroxy-2-nonenal (HNE) forming a lipid adduct devoid of oxidoreductase activity, which then translocates from mitochondria into the nucleus triggering DNA damage and cell death. Capable of DNA binding in a non-sequence specific way. This Homo sapiens (Human) protein is Ferroptosis suppressor protein 1.